The primary structure comprises 966 residues: Protein STICHEL-like 4 (966 aa).

Disordered stretches follow at residues 64-118 (RSLR…DRSS) and 200-237 (RDNAAGNESEMSIASNSVPRGEKYEGEEGGGGRDREQN). A compositionally biased stretch (basic and acidic residues) spans 75–84 (LKEDHQDSRE). Over residues 98 to 108 (PIVSFGTSKVT) the composition is skewed to polar residues. Residues 109–118 (PSDEKFDRSS) are compositionally biased toward basic and acidic residues. The segment covering 208 to 217 (SEMSIASNSV) has biased composition (polar residues). Over residues 219-236 (RGEKYEGEEGGGGRDREQ) the composition is skewed to basic and acidic residues. 384 to 391 (GPNGTGKT) lines the ATP pocket. Zn(2+) is bound by residues Cys-403, Cys-412, Cys-415, and Cys-418. Residues 650 to 678 (SKEDMEKLKQALKTLSESEKQLRVSNDKL) adopt a coiled-coil conformation. The span at 706–717 (FNHTPLTDSDPS) shows a compositional bias: polar residues. The disordered stretch occupies residues 706–733 (FNHTPLTDSDPSNHVVAGTRRDDSKQGF).

It belongs to the DnaX/STICHEL family.

The protein is Protein STICHEL-like 4 of Arabidopsis thaliana (Mouse-ear cress).